A 74-amino-acid polypeptide reads, in one-letter code: Mucroporin (74 aa).

An N-terminal signal peptide occupies residues 1-22 (MKVKFLLAVFLIVLVVTDHCHA). Lys-39 carries the lysine amide modification. Positions 45–74 (QMEARFEPQNRNYRKRELDLEKLFANMPDY) are excised as a propeptide.

It belongs to the non-disulfide-bridged peptide (NDBP) superfamily. Short antimicrobial peptide (group 4) family. As to expression, expressed by the venom gland.

It localises to the secreted. The protein resides in the target cell membrane. Mucroporin: cationic host defense peptide that have antibacterial activity by breaking membranes. Is more effective on Gram-positive than on Gram-negative bacteria. Minimum inhibitory concentrations (MIC) are the following: MIC=&gt;100 ug/ml against E.coli AB94012, MIC=&gt;100 ug/ml against P.aeruginosa AB93066, MIC=25 ug/ml against B.thuringiensis AB92037, MIC=50 ug/ml against B.subtilis AB91021, MIC=25 ug/ml against S.aureus AB94004, and MIC=25 ug/ml against the methicillin-resistant coagulase-negative Staphylococcus. Its synthetic analog mucroporin-M1 is more effective. Does not show antiviral activity against any of measles, SARS-CoV, influenza H5N1, hepatitis B and HIV-1 viruses. Functionally, mutant mucroporin-M1: can inhibit Gram-positive bacteria at low concentrations and antibiotic-resistant pathogens. Minimum inhibitory concentrations (MIC) are the following: MIC=12.5 ug/ml against E.coli AB94012, MIC=100 ug/ml against P.aeruginosa AB93066, MIC=25 ug/ml against B.thuringiensis AB92037, MIC=25 ug/ml against B.subtilis AB91021, MIC=5 ug/ml against S.aureus AB94004, and MIC=5 ug/ml against the methicillin-resistant coagulase-negative Staphylococcus. Also shows antiviral activities against measles (EC(50) of 7.15 ug/ml), SARS-CoV (EC(50) of 14.46 ug/ml), influenza H5N1 viruses (EC(50) of 2.10 mug/ml), HIV-1, and hepatitis B virus. This chain is Mucroporin, found in Lychas mucronatus (Chinese swimming scorpion).